We begin with the raw amino-acid sequence, 210 residues long: MSTIEAAKPKTEVSPLLKLVLELGPLMVFFFANSRGEWLAGRFPALAELGGPIFIATGLFMAATAAALIASWIMTRTLPMMPLVSGIVVFVFGALTLWLQNDTFIKMKPTIVNTLFGAILLGGLLFGKSLLGYVFHAAFKLDEEGWRKLTIRWGVFFLFLAVLNEVIWRSFSTDFWVAFKVWGTMPITILFTLAQMPLIMKHSLEQDSAE.

The next 6 helical transmembrane spans lie at 12–32 (EVSP…FFFA), 53–73 (IFIA…ASWI), 78–98 (LPMM…LTLW), 115–135 (LFGA…GYVF), 148–168 (KLTI…EVIW), and 175–195 (FWVA…TLAQ).

It belongs to the YciB family.

The protein resides in the cell inner membrane. Its function is as follows. Plays a role in cell envelope biogenesis, maintenance of cell envelope integrity and membrane homeostasis. This is Inner membrane-spanning protein YciB from Rhizobium meliloti (strain 1021) (Ensifer meliloti).